A 964-amino-acid chain; its full sequence is Protein translocase subunit SecA (964 aa).

Residues Gln-86, 104-108 (GEGKT), and Asp-494 contribute to the ATP site. The segment at 846 to 964 (ETAESADTIA…YKMCHGQNEA (119 aa)) is disordered. Residues 871 to 882 (AEGEVEEEDEDT) are compositionally biased toward acidic residues. Residues 887-900 (AIAESAAASEAGES) show a composition bias toward low complexity. Zn(2+) is bound by residues Cys-947, Cys-949, Cys-958, and His-959.

It belongs to the SecA family. Monomer and homodimer. Part of the essential Sec protein translocation apparatus which comprises SecA, SecYEG and auxiliary proteins SecDF. Other proteins may also be involved. Zn(2+) is required as a cofactor.

The protein localises to the cell membrane. It is found in the cytoplasm. The catalysed reaction is ATP + H2O + cellular proteinSide 1 = ADP + phosphate + cellular proteinSide 2.. In terms of biological role, part of the Sec protein translocase complex. Interacts with the SecYEG preprotein conducting channel. Has a central role in coupling the hydrolysis of ATP to the transfer of proteins into and across the cell membrane, serving as an ATP-driven molecular motor driving the stepwise translocation of polypeptide chains across the membrane. The polypeptide is Protein translocase subunit SecA (Bifidobacterium longum subsp. infantis (strain ATCC 15697 / DSM 20088 / JCM 1222 / NCTC 11817 / S12)).